The chain runs to 328 residues: MDVSLLLNVEGVKKTILHGGTGELPSFITGSRVTFHFRTMKCDDERTVIDDSKQVGQPMSIIIGNMFKLEVWETLLTSMRLGEVAEFWCDTIHTGVYPMLSRSLRQVAEGKDPTSWHVHTCGLANMFAYHTLGYEDLDELQKEPQPLVFLIELLQVEAPNEYQRETWNLNNEERMQAVPLLHGEGNRLYKLGRYDQAATKYQEAIVCLRNLQTKEKPWEVEWLKLEKMINTLILNYCQCLLKKEEYYEVLEHTSDILRHHPGIVKAYYMRARAHAEVWNAEEAKADLEKVLELEPSMRKAVLRELRLLESRLADKQEEERQRCRSMLG.

Residues 53–145 (KQVGQPMSII…DLDELQKEPQ (93 aa)) form the PPIase FKBP-type domain. TPR repeat units follow at residues 178–211 (VPLL…LRNL), 230–263 (NTLI…HPGI), and 264–297 (VKAY…EPSM).

In terms of assembly, interacts with NUB1.

It is found in the cytoplasm. The protein resides in the nucleus. In terms of biological role, may be important in protein trafficking and/or protein folding and stabilization. The protein is Aryl-hydrocarbon-interacting protein-like 1 (Aipl1) of Mus musculus (Mouse).